We begin with the raw amino-acid sequence, 350 residues long: MKFIDEAKITVLAGKGGDGSASFRREKYIPKGGPDGGDGGRGGSVYAVADRNVNTLVEFRYTRIFKAQKGENGRGAQCYGKAGDDLTIRVPVGTVFSDVNSGEVVADLAEDGETVCLAKGGKGGLGNIHFKSSTNRAPRQHTLGEPGEEWELALELKVLADVGLLGMPNAGKSTFIRAVSAARPKVADYPFTTLAPNLGVVRVDSERSFVIADIPGLIEGAAEGAGLGHQFLRHLQRTRLLLHLVDISPRWEAGDPVHEARAIVEELRKYDQALYEKPRWLVLNKLDMVDEGEREAVVAKFVEDYGWNGPVFAISALDGSGCSALTYAVMDYLGMLAPRHEAEDPAPPAS.

The Obg domain maps to 1 to 159; it reads MKFIDEAKIT…WELALELKVL (159 aa). The segment at 17–43 is disordered; that stretch reads GDGSASFRREKYIPKGGPDGGDGGRGG. Over residues 33–43 the composition is skewed to gly residues; it reads GPDGGDGGRGG. One can recognise an OBG-type G domain in the interval 160 to 334; it reads ADVGLLGMPN…LTYAVMDYLG (175 aa). GTP contacts are provided by residues 166 to 173, 191 to 195, 213 to 216, 284 to 287, and 315 to 317; these read GMPNAGKS, FTTLA, DIPG, NKLD, and SAL. Residues Ser173 and Thr193 each coordinate Mg(2+).

Belongs to the TRAFAC class OBG-HflX-like GTPase superfamily. OBG GTPase family. As to quaternary structure, monomer. Mg(2+) serves as cofactor.

It is found in the cytoplasm. Functionally, an essential GTPase which binds GTP, GDP and possibly (p)ppGpp with moderate affinity, with high nucleotide exchange rates and a fairly low GTP hydrolysis rate. Plays a role in control of the cell cycle, stress response, ribosome biogenesis and in those bacteria that undergo differentiation, in morphogenesis control. This Thiobacillus denitrificans (strain ATCC 25259 / T1) protein is GTPase Obg.